We begin with the raw amino-acid sequence, 232 residues long: BTB/POZ domain-containing protein KCTD11 (232 aa).

One can recognise a BTB domain in the interval 1–49; the sequence is MLGAMFRAGTPMPPNLNSQGGGHYFIDRDGKAFRHILNFLRLGRLDLPR.

Homopentamer. Interacts with KCTD6 and KCTD21; KCTD11 and KCTD6 or KCTD21 may associate in pentameric assemblies. Component of the BCR(KCTD11) E3 ubiquitin ligase complex, at least composed of CUL3 and KCTD11 and RBX1. Interacts (via BTB domain) with CUL3; initially a 4:4 stoichiometry has been reported, however, electron microscopy revealed pentameric states of the BTB domain. As to expression, higher expression in cerebellum than in whole brain and lower expression in medulloblastoma.

It participates in protein modification; protein ubiquitination. In terms of biological role, plays a role as a marker and a regulator of neuronal differentiation; Up-regulated by a variety of neurogenic signals, such as retinoic acid, epidermal growth factor/EGF and NGFB/nerve growth factor. Induces apoptosis, growth arrest and the expression of cyclin-dependent kinase inhibitor CDKN1B. Plays a role as a tumor repressor and inhibits cell growth and tumorigenicity of medulloblastoma (MDB). Acts as a probable substrate-specific adapter for a BCR (BTB-CUL3-RBX1) E3 ubiquitin-protein ligase complex towards HDAC1. Functions as antagonist of the Hedgehog pathway on cell proliferation and differentiation by affecting the nuclear transfer of transcription factor GLI1, thus maintaining cerebellar granule cells in undifferentiated state, this effect probably occurs via HDAC1 down-regulation, keeping GLI1 acetylated and inactive. When knock-down, Hedgehog antagonism is impaired and proliferation of granule cells is sustained. Activates the caspase cascade. This chain is BTB/POZ domain-containing protein KCTD11 (KCTD11), found in Homo sapiens (Human).